Reading from the N-terminus, the 68-residue chain is Large ribosomal subunit protein bL31 (68 aa).

The Zn(2+) site is built by Cys-16, Cys-18, Cys-38, and Cys-41.

It belongs to the bacterial ribosomal protein bL31 family. Type A subfamily. In terms of assembly, part of the 50S ribosomal subunit. Zn(2+) serves as cofactor.

Functionally, binds the 23S rRNA. This chain is Large ribosomal subunit protein bL31, found in Thiobacillus denitrificans (strain ATCC 25259 / T1).